Consider the following 103-residue polypeptide: Pyrimidine/purine nucleoside phosphorylase (103 aa).

Belongs to the nucleoside phosphorylase PpnP family.

It carries out the reaction a purine D-ribonucleoside + phosphate = a purine nucleobase + alpha-D-ribose 1-phosphate. The catalysed reaction is adenosine + phosphate = alpha-D-ribose 1-phosphate + adenine. The enzyme catalyses cytidine + phosphate = cytosine + alpha-D-ribose 1-phosphate. It catalyses the reaction guanosine + phosphate = alpha-D-ribose 1-phosphate + guanine. It carries out the reaction inosine + phosphate = alpha-D-ribose 1-phosphate + hypoxanthine. The catalysed reaction is thymidine + phosphate = 2-deoxy-alpha-D-ribose 1-phosphate + thymine. The enzyme catalyses uridine + phosphate = alpha-D-ribose 1-phosphate + uracil. It catalyses the reaction xanthosine + phosphate = alpha-D-ribose 1-phosphate + xanthine. Functionally, catalyzes the phosphorolysis of diverse nucleosides, yielding D-ribose 1-phosphate and the respective free bases. Can use uridine, adenosine, guanosine, cytidine, thymidine, inosine and xanthosine as substrates. Also catalyzes the reverse reactions. The protein is Pyrimidine/purine nucleoside phosphorylase of Methylococcus capsulatus (strain ATCC 33009 / NCIMB 11132 / Bath).